The sequence spans 244 residues: Glucosamine-6-phosphate deaminase (244 aa).

The active-site Proton acceptor; for enolization step is aspartate 67. Asparagine 133 (for ring-opening step) is an active-site residue. Histidine 135 functions as the Proton acceptor; for ring-opening step in the catalytic mechanism. Residue glutamate 140 is the For ring-opening step of the active site.

The protein belongs to the glucosamine/galactosamine-6-phosphate isomerase family. NagB subfamily.

The catalysed reaction is alpha-D-glucosamine 6-phosphate + H2O = beta-D-fructose 6-phosphate + NH4(+). Its pathway is amino-sugar metabolism; N-acetylneuraminate degradation; D-fructose 6-phosphate from N-acetylneuraminate: step 5/5. In terms of biological role, catalyzes the reversible isomerization-deamination of glucosamine 6-phosphate (GlcN6P) to form fructose 6-phosphate (Fru6P) and ammonium ion. This chain is Glucosamine-6-phosphate deaminase, found in Mycoplasma mycoides subsp. mycoides SC (strain CCUG 32753 / NCTC 10114 / PG1).